A 539-amino-acid chain; its full sequence is GMP synthase [glutamine-hydrolyzing] (539 aa).

Residues 4–203 form the Glutamine amidotransferase type-1 domain; sequence KILILDFGSQ…VHDICGCKSD (200 aa). Catalysis depends on cysteine 82, which acts as the Nucleophile. Active-site residues include histidine 177 and glutamate 179. One can recognise a GMPS ATP-PPase domain in the interval 204–395; it reads WNMPDYIAEA…LGLPHDMVYR (192 aa). 231–237 provides a ligand contact to ATP; that stretch reads SGGVDSS.

As to quaternary structure, homodimer.

It carries out the reaction XMP + L-glutamine + ATP + H2O = GMP + L-glutamate + AMP + diphosphate + 2 H(+). The protein operates within purine metabolism; GMP biosynthesis; GMP from XMP (L-Gln route): step 1/1. Catalyzes the synthesis of GMP from XMP. The chain is GMP synthase [glutamine-hydrolyzing] from Janthinobacterium sp. (strain Marseille) (Minibacterium massiliensis).